Here is a 930-residue protein sequence, read N- to C-terminus: Isoleucine--tRNA ligase (930 aa).

The short motif at proline 57 to histidine 67 is the 'HIGH' region element. L-isoleucyl-5'-AMP is bound at residue glutamate 554. Residues lysine 595–serine 599 carry the 'KMSKS' region motif. An ATP-binding site is contributed by lysine 598. 4 residues coordinate Zn(2+): cysteine 888, cysteine 891, cysteine 908, and cysteine 911.

Belongs to the class-I aminoacyl-tRNA synthetase family. IleS type 1 subfamily. In terms of assembly, monomer. Zn(2+) is required as a cofactor.

Its subcellular location is the cytoplasm. The catalysed reaction is tRNA(Ile) + L-isoleucine + ATP = L-isoleucyl-tRNA(Ile) + AMP + diphosphate. Catalyzes the attachment of isoleucine to tRNA(Ile). As IleRS can inadvertently accommodate and process structurally similar amino acids such as valine, to avoid such errors it has two additional distinct tRNA(Ile)-dependent editing activities. One activity is designated as 'pretransfer' editing and involves the hydrolysis of activated Val-AMP. The other activity is designated 'posttransfer' editing and involves deacylation of mischarged Val-tRNA(Ile). The sequence is that of Isoleucine--tRNA ligase from Streptococcus pneumoniae (strain CGSP14).